The following is a 439-amino-acid chain: Proline--tRNA ligase (439 aa).

Belongs to the class-II aminoacyl-tRNA synthetase family. ProS type 2 subfamily. In terms of assembly, homodimer.

The protein resides in the cytoplasm. It carries out the reaction tRNA(Pro) + L-proline + ATP = L-prolyl-tRNA(Pro) + AMP + diphosphate. Its function is as follows. Catalyzes the attachment of proline to tRNA(Pro) in a two-step reaction: proline is first activated by ATP to form Pro-AMP and then transferred to the acceptor end of tRNA(Pro). This chain is Proline--tRNA ligase, found in Hyphomonas neptunium (strain ATCC 15444).